The primary structure comprises 336 residues: Dihydroorotate dehydrogenase (quinone) (336 aa).

FMN-binding positions include 62-66 (AGLDK) and Thr-86. Substrate is bound at residue Lys-66. 111–115 (NRMGF) contributes to the substrate binding site. FMN-binding residues include Asn-139 and Asn-172. Asn-172 is a substrate binding site. Residue Ser-175 is the Nucleophile of the active site. Residue Asn-177 participates in substrate binding. Residues Lys-217 and Thr-245 each coordinate FMN. 246 to 247 (NT) provides a ligand contact to substrate. FMN contacts are provided by residues Gly-268, Gly-297, and 318–319 (YS).

The protein belongs to the dihydroorotate dehydrogenase family. Type 2 subfamily. As to quaternary structure, monomer. Requires FMN as cofactor.

Its subcellular location is the cell membrane. It carries out the reaction (S)-dihydroorotate + a quinone = orotate + a quinol. Its pathway is pyrimidine metabolism; UMP biosynthesis via de novo pathway; orotate from (S)-dihydroorotate (quinone route): step 1/1. Its function is as follows. Catalyzes the conversion of dihydroorotate to orotate with quinone as electron acceptor. The sequence is that of Dihydroorotate dehydrogenase (quinone) from Escherichia fergusonii (strain ATCC 35469 / DSM 13698 / CCUG 18766 / IAM 14443 / JCM 21226 / LMG 7866 / NBRC 102419 / NCTC 12128 / CDC 0568-73).